The following is a 355-amino-acid chain: Uroporphyrinogen decarboxylase (355 aa).

Residues 27–31 (RQAGR), aspartate 78, tyrosine 155, serine 210, and histidine 328 contribute to the substrate site.

Belongs to the uroporphyrinogen decarboxylase family. As to quaternary structure, homodimer.

It localises to the cytoplasm. The catalysed reaction is uroporphyrinogen III + 4 H(+) = coproporphyrinogen III + 4 CO2. It participates in porphyrin-containing compound metabolism; protoporphyrin-IX biosynthesis; coproporphyrinogen-III from 5-aminolevulinate: step 4/4. In terms of biological role, catalyzes the decarboxylation of four acetate groups of uroporphyrinogen-III to yield coproporphyrinogen-III. The protein is Uroporphyrinogen decarboxylase of Pseudomonas fluorescens (strain ATCC BAA-477 / NRRL B-23932 / Pf-5).